A 215-amino-acid polypeptide reads, in one-letter code: Tricarboxylate transporter ALT9 (215 aa).

Solcar repeat units lie at residues T18 to M106 and C111 to L197. 3 helical membrane-spanning segments follow: residues T19–L39, G112–M132, and V182–V202.

This sequence belongs to the mitochondrial carrier (TC 2.A.29) family.

The protein resides in the mitochondrion inner membrane. It participates in mycotoxin biosynthesis. Its function is as follows. Tricarboxylate transporter; part of the gene cluster that mediates the biosynthesis of the host-selective toxins (HSTs) AAL-toxins, sphinganine-analog mycotoxins responsible for Alternaria stem canker on tomato by the tomato pathotype. The biosynthesis starts with the polyketide synthase ALT1-catalyzed C-16 carbon chain assembly from one starter acetyl-CoA unit with malonyl-CoA extender units. ALT1 also selectively transfers methyl groups at the first and the third cycle of chain elongation for AAL toxin. The C-16 polyketide chain is released from the enzyme by a nucleophilic attack of a carbanion, which is derived from R-carbon of glycin by decarboxylation, on the carbonyl carbon of polyketide acyl chain. This step is probably catalyzed by a pyridoxal 5'-phosphate-dependent aminoacyl transferase ALT4. The respective functions of the other enzymes encoded by the cluster have still to be elucidated. The sphingosine N-acyltransferase-like protein ALT7 seems not to act as a resistance/self-tolerance factor against the toxin in the toxin biosynthetic gene cluster, contrary to what is expected. The chain is Tricarboxylate transporter ALT9 from Alternaria alternata (Alternaria rot fungus).